We begin with the raw amino-acid sequence, 405 residues long: Amino sugar nitrososynthase DnmZ (405 aa).

2 residues coordinate dTDP: Glu-117 and Arg-332.

This sequence belongs to the acyl-CoA dehydrogenase family. In terms of assembly, homotetramer. Requires FAD as cofactor.

It participates in antibiotic biosynthesis. Nitrososynthase involved in the biosynthesis of baumycin. Catalyzes the double-oxidation of TDP-L-epi-vancosamine to TDP-L-epi-vancosonitrose. The rapid turnover of TDP-L-epi-vancosamine suggests that this compound, or a closely related analog, is the natural substrate for DnmZ. Can also catalyze the double-oxidation of TDP-L-evernosamine to TDP-L-evernitrosose. This Streptomyces peucetius protein is Amino sugar nitrososynthase DnmZ.